The primary structure comprises 117 residues: Large ribosomal subunit protein bL20 (117 aa).

This sequence belongs to the bacterial ribosomal protein bL20 family.

Functionally, binds directly to 23S ribosomal RNA and is necessary for the in vitro assembly process of the 50S ribosomal subunit. It is not involved in the protein synthesizing functions of that subunit. This is Large ribosomal subunit protein bL20 from Geobacter metallireducens (strain ATCC 53774 / DSM 7210 / GS-15).